An 827-amino-acid chain; its full sequence is Glycerol-3-phosphate acyltransferase (827 aa).

The HXXXXD motif motif lies at 325 to 330 (CHRSHM).

The protein belongs to the GPAT/DAPAT family.

It is found in the cell inner membrane. It carries out the reaction sn-glycerol 3-phosphate + an acyl-CoA = a 1-acyl-sn-glycero-3-phosphate + CoA. Its pathway is phospholipid metabolism; CDP-diacylglycerol biosynthesis; CDP-diacylglycerol from sn-glycerol 3-phosphate: step 1/3. This chain is Glycerol-3-phosphate acyltransferase, found in Shigella sonnei (strain Ss046).